Reading from the N-terminus, the 295-residue chain is Bifunctional protein FolD (295 aa).

NADP(+) is bound by residues 177-179 (GRS) and serine 202.

Belongs to the tetrahydrofolate dehydrogenase/cyclohydrolase family. As to quaternary structure, homodimer.

It carries out the reaction (6R)-5,10-methylene-5,6,7,8-tetrahydrofolate + NADP(+) = (6R)-5,10-methenyltetrahydrofolate + NADPH. The catalysed reaction is (6R)-5,10-methenyltetrahydrofolate + H2O = (6R)-10-formyltetrahydrofolate + H(+). The protein operates within one-carbon metabolism; tetrahydrofolate interconversion. Functionally, catalyzes the oxidation of 5,10-methylenetetrahydrofolate to 5,10-methenyltetrahydrofolate and then the hydrolysis of 5,10-methenyltetrahydrofolate to 10-formyltetrahydrofolate. The polypeptide is Bifunctional protein FolD (Psychrobacter arcticus (strain DSM 17307 / VKM B-2377 / 273-4)).